The following is a 208-amino-acid chain: Large ribosomal subunit protein uL4 (208 aa).

The tract at residues 46–84 is disordered; sequence QGTHKAKTRAEVRGGGRKPFRQKGTGNARQGSTRSPLMI. Residues 69-80 show a composition bias toward polar residues; it reads GTGNARQGSTRS.

The protein belongs to the universal ribosomal protein uL4 family. Part of the 50S ribosomal subunit.

In terms of biological role, one of the primary rRNA binding proteins, this protein initially binds near the 5'-end of the 23S rRNA. It is important during the early stages of 50S assembly. It makes multiple contacts with different domains of the 23S rRNA in the assembled 50S subunit and ribosome. Functionally, forms part of the polypeptide exit tunnel. In Chlorobium limicola (strain DSM 245 / NBRC 103803 / 6330), this protein is Large ribosomal subunit protein uL4.